A 508-amino-acid chain; its full sequence is Maturase K (508 aa).

It belongs to the intron maturase 2 family. MatK subfamily.

The protein resides in the plastid. The protein localises to the chloroplast. Usually encoded in the trnK tRNA gene intron. Probably assists in splicing its own and other chloroplast group II introns. The protein is Maturase K of Antirrhinum majus (Garden snapdragon).